The primary structure comprises 229 residues: Cytidylate kinase (229 aa).

Residue 12–20 coordinates ATP; that stretch reads GPSGAGKGT.

It belongs to the cytidylate kinase family. Type 1 subfamily.

The protein localises to the cytoplasm. The enzyme catalyses CMP + ATP = CDP + ADP. It carries out the reaction dCMP + ATP = dCDP + ADP. This Pseudomonas paraeruginosa (strain DSM 24068 / PA7) (Pseudomonas aeruginosa (strain PA7)) protein is Cytidylate kinase.